A 74-amino-acid polypeptide reads, in one-letter code: Protein SlyX homolog (74 aa).

The segment at 54 to 74 (QDRNPDAQEPYSLRDEIPPHY) is disordered.

It belongs to the SlyX family.

The chain is Protein SlyX homolog from Neisseria gonorrhoeae (strain ATCC 700825 / FA 1090).